The following is a 261-amino-acid chain: Indole-3-glycerol phosphate synthase (261 aa).

The protein belongs to the TrpC family.

It catalyses the reaction 1-(2-carboxyphenylamino)-1-deoxy-D-ribulose 5-phosphate + H(+) = (1S,2R)-1-C-(indol-3-yl)glycerol 3-phosphate + CO2 + H2O. Its pathway is amino-acid biosynthesis; L-tryptophan biosynthesis; L-tryptophan from chorismate: step 4/5. The chain is Indole-3-glycerol phosphate synthase from Burkholderia multivorans (strain ATCC 17616 / 249).